The chain runs to 396 residues: Putative F-box protein At4g22660 (396 aa).

One can recognise an F-box domain in the interval 7-58 (PNTWSDLPLDLLNLVFKRLSFANFRQAKSVCSSWYSASKQSVPKNQIPWLML).

This chain is Putative F-box protein At4g22660, found in Arabidopsis thaliana (Mouse-ear cress).